Here is a 469-residue protein sequence, read N- to C-terminus: Glutamate--tRNA ligase 2 (469 aa).

A 'HIGH' region motif is present at residues 8-18 (PSPTGFLHVGG). A 'KMSKS' region motif is present at residues 250 to 254 (KLSKR). Lys253 lines the ATP pocket.

Belongs to the class-I aminoacyl-tRNA synthetase family. Glutamate--tRNA ligase type 1 subfamily. In terms of assembly, monomer.

Its subcellular location is the cytoplasm. The catalysed reaction is tRNA(Glu) + L-glutamate + ATP = L-glutamyl-tRNA(Glu) + AMP + diphosphate. Functionally, catalyzes the attachment of glutamate to tRNA(Glu) in a two-step reaction: glutamate is first activated by ATP to form Glu-AMP and then transferred to the acceptor end of tRNA(Glu). This Thermotoga petrophila (strain ATCC BAA-488 / DSM 13995 / JCM 10881 / RKU-1) protein is Glutamate--tRNA ligase 2.